The following is a 153-amino-acid chain: 3-hydroxyacyl-[acyl-carrier-protein] dehydratase FabZ (153 aa).

Residue His-47 is part of the active site.

Belongs to the thioester dehydratase family. FabZ subfamily.

Its subcellular location is the cytoplasm. The catalysed reaction is a (3R)-hydroxyacyl-[ACP] = a (2E)-enoyl-[ACP] + H2O. Functionally, involved in unsaturated fatty acids biosynthesis. Catalyzes the dehydration of short chain beta-hydroxyacyl-ACPs and long chain saturated and unsaturated beta-hydroxyacyl-ACPs. The polypeptide is 3-hydroxyacyl-[acyl-carrier-protein] dehydratase FabZ (Myxococcus xanthus (strain DK1622)).